The chain runs to 170 residues: Methanogen homoaconitase small subunit (170 aa).

The YLRT motif lies at Tyr26–Thr29.

Belongs to the LeuD family. LeuD type 2 subfamily. As to quaternary structure, heterotetramer of 2 HacA and 2 HacB proteins.

It carries out the reaction (2R)-homocitrate = (2R,3S)-homoisocitrate. The catalysed reaction is (2R)-homocitrate = cis-homoaconitate + H2O. The enzyme catalyses (2R,3S)-homoisocitrate = cis-homoaconitate + H2O. It catalyses the reaction cis-(homo)2aconitate + H2O = (2R,3S)-iso(homo)2citrate. It carries out the reaction cis-(homo)3aconitate + H2O = (2R,3S)-iso(homo)3citrate. It participates in organic acid metabolism; 2-oxosuberate biosynthesis. Component of a hydro-lyase with broad substrate specificity for cis-unsaturated tricarboxylic acids. Catalyzes both the reversible dehydration of (R)-homocitrate ((R)-2-hydroxybutane-1,2,4-tricarboxylate) to produce cis-homoaconitate ((Z)-but-1-ene-1,2,4-tricarboxylate), and its hydration to homoisocitrate ((1R,2S)-1-hydroxybutane-1,2,4-tricarboxylate). Is also able to hydrate the analogous longer chain substrates cis-homo(2)-aconitate, cis-homo(3)-aconitate. These reactions are part of the biosynthesis pathway of coenzyme B. This is Methanogen homoaconitase small subunit (hacB) from Methanothermobacter thermautotrophicus (strain ATCC 29096 / DSM 1053 / JCM 10044 / NBRC 100330 / Delta H) (Methanobacterium thermoautotrophicum).